We begin with the raw amino-acid sequence, 307 residues long: Protein pxr1 (307 aa).

Residues 1-11 (MGLAAPRKKTK) are compositionally biased toward basic residues. Disordered stretches follow at residues 1 to 25 (MGLA…SRST) and 144 to 234 (NATA…SDCD). Residues 15-25 (DPNNTSWSRST) are compositionally biased toward polar residues. Residues 25-79 (TDGFGHRILKAQGWTPGGFLGARNATHSDLFTTASASHIRVVLKDDTLGLGARPK) form the G-patch domain. 2 stretches are compositionally biased toward basic and acidic residues: residues 154–168 (LRVD…HESE) and 206–221 (GKEL…EKKQ).

This sequence belongs to the PINX1 family.

The protein localises to the nucleus. The protein resides in the nucleolus. Functionally, involved in rRNA-processing at A0, A1 and A2 sites and negatively regulates telomerase. This Neosartorya fischeri (strain ATCC 1020 / DSM 3700 / CBS 544.65 / FGSC A1164 / JCM 1740 / NRRL 181 / WB 181) (Aspergillus fischerianus) protein is Protein pxr1 (pxr1).